We begin with the raw amino-acid sequence, 435 residues long: Nuclear hormone receptor family member nhr-28 (435 aa).

The segment at residues 5-80 is a DNA-binding region (nuclear receptor); sequence KKPCSVCGEA…VGMRKSAVQR (76 aa). 2 NR C4-type zinc fingers span residues 8 to 28 and 44 to 63; these read CSVC…CRAC and CRAM…CRAC. The interval 84-106 is disordered; sequence LFGRQDSSDGSNPRVSPSTSWPM. Over residues 91–104 the composition is skewed to polar residues; the sequence is SDGSNPRVSPSTSW. The NR LBD domain maps to 113–374; the sequence is IEEPGMATLN…ETFYELVSGR (262 aa).

The protein belongs to the nuclear hormone receptor family.

The protein resides in the nucleus. Its function is as follows. Orphan nuclear receptor. The protein is Nuclear hormone receptor family member nhr-28 of Caenorhabditis briggsae.